The primary structure comprises 361 residues: uncharacterized protein (361 aa).

The N-terminal stretch at 1–28 is a signal peptide; sequence MSKSKFTKIIVVICIAAMFITGTSILSF.

This is an uncharacterized protein from Ruminiclostridium cellulolyticum (strain ATCC 35319 / DSM 5812 / JCM 6584 / H10) (Clostridium cellulolyticum).